Here is a 662-residue protein sequence, read N- to C-terminus: MLFNFYNKTSAACKSLPAKALSNVRYFQTSPISRKMPLPPVLESRRPKESPEFDYSTLSNYKSFKVKHSQLDVSVDFKKKTISGSVSYEIEKVKKDENTIKLDTSYLKISKVKVDDEDDVKFKLLERKHPLGAQLIVSPSSLPEIFHLCLQFSTTADCTALQWLDEHQTSGKPYVFSQLEAIHARSLFTCFDTPSVKSTYLANIKSELPVVFSGIQTGYDDSTKVYSFKQEVPIPAYLIGIASGDLASADIGPRSKVYVEPYRLKDAQWEFDGDVEKFITTAEDIIFKYEWGTYDILVNPNSYPYGGMESPNMTFATPTLIAHDKSNIDVIAHELAHSWSGNLVTNCSWDHFWLNEGWTVYLERRITGAIHGEATRHFSSLIGWNDLEGSISAMQNPERFSCLVQNLKDGTDPDNAFSTVPYEKGSNLLFYLENLLGGKEVFDPFIKHYFTKFARQSLDTWQFLDALFEFFHDKREILESVDWQTWLFTPGMPPKPKLITDLADDVYALANKWIASAQKFTEREQFEKEFSIKDISEFSSNQIVLLLDTLVQGGMPEKDTFKWSNYPEASEIFTDIYEDKISKSQNAEVIFRNYRLQVKSHITSSYPELAEWLGTVGRMKFVRPGYRLLNEVDRELAIKTFHRFRDSYHPICKSLVKQDLGI.

A peptide is bound by residues 178 to 180 (QLE) and 304 to 309 (PYGGME). His-333 contributes to the Zn(2+) binding site. Glu-334 serves as the catalytic Proton acceptor. The Zn(2+) site is built by His-337 and Glu-356. Catalysis depends on Tyr-422, which acts as the Proton donor.

The protein belongs to the peptidase M1 family. Zn(2+) serves as cofactor.

The protein resides in the cytoplasm. Its subcellular location is the nucleus. The enzyme catalyses an epoxide + H2O = an ethanediol. In terms of biological role, aminopeptidase that preferentially cleaves di- and tripeptides. Also has low epoxide hydrolase activity (in vitro). Can hydrolyze the epoxide leukotriene LTA(4) but it forms preferentially 5,6-dihydroxy-7,9,11,14-eicosatetraenoic acid rather than the cytokine leukotriene B(4) as the product compared to the homologous mammalian enzyme (in vitro). This Kluyveromyces lactis (strain ATCC 8585 / CBS 2359 / DSM 70799 / NBRC 1267 / NRRL Y-1140 / WM37) (Yeast) protein is Leucine aminopeptidase 2.